The following is a 372-amino-acid chain: 4-hydroxy-3-methylbut-2-en-1-yl diphosphate synthase (flavodoxin) (372 aa).

The [4Fe-4S] cluster site is built by cysteine 270, cysteine 273, cysteine 305, and glutamate 312.

Belongs to the IspG family. [4Fe-4S] cluster is required as a cofactor.

It catalyses the reaction (2E)-4-hydroxy-3-methylbut-2-enyl diphosphate + oxidized [flavodoxin] + H2O + 2 H(+) = 2-C-methyl-D-erythritol 2,4-cyclic diphosphate + reduced [flavodoxin]. Its pathway is isoprenoid biosynthesis; isopentenyl diphosphate biosynthesis via DXP pathway; isopentenyl diphosphate from 1-deoxy-D-xylulose 5-phosphate: step 5/6. Converts 2C-methyl-D-erythritol 2,4-cyclodiphosphate (ME-2,4cPP) into 1-hydroxy-2-methyl-2-(E)-butenyl 4-diphosphate. The protein is 4-hydroxy-3-methylbut-2-en-1-yl diphosphate synthase (flavodoxin) of Pseudoalteromonas translucida (strain TAC 125).